A 348-amino-acid polypeptide reads, in one-letter code: Alcohol dehydrogenase 2 (348 aa).

7 residues coordinate Zn(2+): Cys44, His67, Cys98, Cys101, Cys104, Cys112, and Cys154. NAD(+)-binding positions include 178 to 184, Asp202, Lys207, 269 to 271, and Arg341; these read GAAGGLG and VGL.

Belongs to the zinc-containing alcohol dehydrogenase family. As to quaternary structure, homotetramer. It depends on Zn(2+) as a cofactor.

It localises to the cytoplasm. The enzyme catalyses a primary alcohol + NAD(+) = an aldehyde + NADH + H(+). The catalysed reaction is a secondary alcohol + NAD(+) = a ketone + NADH + H(+). The sequence is that of Alcohol dehydrogenase 2 (ADH2) from Candida albicans (strain SC5314 / ATCC MYA-2876) (Yeast).